Here is a 342-residue protein sequence, read N- to C-terminus: tRNA-specific 2-thiouridylase MnmA (342 aa).

ATP-binding positions include 6-13 (GMSGGVDS) and L32. The active-site Nucleophile is the C99. Cysteines 99 and 190 form a disulfide. Residue G124 coordinates ATP. The interaction with tRNA stretch occupies residues 140–142 (KDQ). C190 acts as the Cysteine persulfide intermediate in catalysis. The interval 292 to 293 (RY) is interaction with tRNA.

Belongs to the MnmA/TRMU family.

It localises to the cytoplasm. It catalyses the reaction S-sulfanyl-L-cysteinyl-[protein] + uridine(34) in tRNA + AH2 + ATP = 2-thiouridine(34) in tRNA + L-cysteinyl-[protein] + A + AMP + diphosphate + H(+). Functionally, catalyzes the 2-thiolation of uridine at the wobble position (U34) of tRNA, leading to the formation of s(2)U34. This chain is tRNA-specific 2-thiouridylase MnmA, found in Hydrogenobaculum sp. (strain Y04AAS1).